Reading from the N-terminus, the 294-residue chain is Ventral anterior homeobox 2b (294 aa).

The segment covering 1–10 (MGDGVSEERS) has biased composition (basic and acidic residues). Disordered stretches follow at residues 1-27 (MGDGVSEERSPLCGKSATSCSERVRDR), 43-65 (KDIPVTSTSSPGSSKEEVLDSQS), 149-168 (RRTKQKKDQSRDSEKRSSST), 190-223 (PAPPNMISSQNNMGTSSGNGTSLGTSGSTSPVIS), and 272-294 (SSAFEPYTRLDRKDTASGKKSTS). The segment at residues 98 to 157 (PKRTRTSFTAEQLYRLELEFQRCQYVVGRERTELARQLNLSETQVKVWFQNRRTKQKKDQ) is a DNA-binding region (homeobox). Over residues 154-165 (KKDQSRDSEKRS) the composition is skewed to basic and acidic residues. Residues 197 to 219 (SSQNNMGTSSGNGTSLGTSGSTS) show a composition bias toward low complexity. Basic and acidic residues predominate over residues 279–288 (TRLDRKDTAS).

Belongs to the EMX homeobox family.

The protein resides in the nucleus. Transcription factor that may function in dorsoventral specification of the forebrain. Regulates the expression of Wnt signaling antagonists. The protein is Ventral anterior homeobox 2b (vax2-b) of Xenopus laevis (African clawed frog).